The following is a 201-amino-acid chain: Recombination protein RecR (201 aa).

The segment at 60 to 75 (CRSCGNVDTSDPCTIC) adopts a C4-type zinc-finger fold. Residues 83 to 178 (TTLVVVEDVS…TVTRLAHGVP (96 aa)) enclose the Toprim domain.

The protein belongs to the RecR family.

Its function is as follows. May play a role in DNA repair. It seems to be involved in an RecBC-independent recombinational process of DNA repair. It may act with RecF and RecO. The chain is Recombination protein RecR from Methylorubrum extorquens (strain CM4 / NCIMB 13688) (Methylobacterium extorquens).